The primary structure comprises 653 residues: Amyloid beta A4 precursor protein-binding family B member 1-interacting protein (653 aa).

The segment at 82 to 141 is disordered; it reads NNKSTAPFPPADASNSYHFHPPPMPSIITEDLSLLPPPPEFDPHYPPPPPDPLTEPKTQE. The span at 116–134 shows a compositional bias: pro residues; that stretch reads LPPPPEFDPHYPPPPPDPL. One can recognise a Ras-associating domain in the interval 165-253; sequence KKRIVKVHMI…IHFLEKNEKY (89 aa). In terms of domain architecture, PH spans 295–404; the sequence is VPELEAALYL…WVTGIRIAKY (110 aa). Residues 462–481 are compositionally biased toward basic and acidic residues; it reads KHGEANKQEKKSSEVNKPET. The segment at 462 to 653 is disordered; that stretch reads KHGEANKQEK…ALQKKREPPT (192 aa). Positions 585 to 604 are enriched in pro residues; the sequence is PAPPPPPPPPAPAANVPPLP. Positions 605-614 are enriched in basic residues; that stretch reads VKKHPPKPPK.

Belongs to the MRL family.

It is found in the cell membrane. It localises to the cytoplasm. The protein localises to the cytoskeleton. Appears to function in the signal transduction from Ras activation to actin cytoskeletal remodeling. The protein is Amyloid beta A4 precursor protein-binding family B member 1-interacting protein (apbb1ip) of Xenopus laevis (African clawed frog).